The following is a 242-amino-acid chain: Protein MHF1 homolog (242 aa).

Residues 208-242 form a disordered region; sequence LKAKEPQSERKRKKGSAKKEDKASSSNAVRITTDL. A compositionally biased stretch (polar residues) spans 231–242; the sequence is SSSNAVRITTDL.

This sequence belongs to the TAF9 family. CENP-S/MHF1 subfamily.

It localises to the nucleus. Involved in the promotion of spontaneous somatic homologous recombination (HR) events, which is opposite to the function of FANCM in ordered HR. Only FANCM is essential for replicative repair in the absence of the endonuclease MUS81. Acts in the same pathway as FANCM to restrain class II meiotic crossing over (CO), and acts with FANCM during meiosis to repair interstrand cross-links (ICLs). This common pathway between MHF1 and FANCM is in parallel to the pathway that involves the RECQ4A helicase. This Arabidopsis thaliana (Mouse-ear cress) protein is Protein MHF1 homolog.